A 400-amino-acid polypeptide reads, in one-letter code: MKEKVVLAYSGGLDTSVTIPWLKDNYDVEVIAVCVNVGQEDDMDKVKEKAVNSGAAKIYVEDVKEEFVTEYLYNAIKWNATYEGKYLLGTSFARPLIAKKLVEVAHKEGAKYICHGCTGKGNDQVRFETAIAAMDPYIKIIAPWRLWNIDSREAEIDYALSKGVEVPVTKEKIYSEDWNLWHISHEGGDLEDPKNEHKEEMYKCVTPPEEAKDEPAYISIYFEKGVPCKINGEELEPVKLIEKVNKVAGENGIGVVDLVENRLVGMKSRGVYETPGGTLLYEAHAQLERLTVDKDAYHYKQVLALKYSELVYDGLWFTTTREALDAFVDTVEENVTGTVKLKLYKGNMKVSSVESENALYDEGISSFGASDLYDHKDAQGFINLFSLPSKIKAMKKLEKK.

8–16 is a binding site for ATP; sequence AYSGGLDTS. Tyrosine 86 and serine 91 together coordinate L-citrulline. Glycine 116 serves as a coordination point for ATP. 3 residues coordinate L-aspartate: threonine 118, asparagine 122, and aspartate 123. L-citrulline is bound at residue asparagine 122. The L-citrulline site is built by arginine 126, serine 175, serine 184, glutamate 260, and tyrosine 272.

The protein belongs to the argininosuccinate synthase family. Type 1 subfamily. Homotetramer.

The protein localises to the cytoplasm. The enzyme catalyses L-citrulline + L-aspartate + ATP = 2-(N(omega)-L-arginino)succinate + AMP + diphosphate + H(+). It functions in the pathway amino-acid biosynthesis; L-arginine biosynthesis; L-arginine from L-ornithine and carbamoyl phosphate: step 2/3. In Clostridium acetobutylicum (strain ATCC 824 / DSM 792 / JCM 1419 / IAM 19013 / LMG 5710 / NBRC 13948 / NRRL B-527 / VKM B-1787 / 2291 / W), this protein is Argininosuccinate synthase.